The following is a 352-amino-acid chain: UDP-N-acetylglucosamine--N-acetylmuramyl-(pentapeptide) pyrophosphoryl-undecaprenol N-acetylglucosamine transferase (352 aa).

The UDP-N-acetyl-alpha-D-glucosamine site is built by Ser195 and Gln287.

The protein belongs to the glycosyltransferase 28 family. MurG subfamily.

It localises to the cell membrane. The enzyme catalyses Mur2Ac(oyl-L-Ala-gamma-D-Glu-L-Lys-D-Ala-D-Ala)-di-trans,octa-cis-undecaprenyl diphosphate + UDP-N-acetyl-alpha-D-glucosamine = beta-D-GlcNAc-(1-&gt;4)-Mur2Ac(oyl-L-Ala-gamma-D-Glu-L-Lys-D-Ala-D-Ala)-di-trans,octa-cis-undecaprenyl diphosphate + UDP + H(+). It functions in the pathway cell wall biogenesis; peptidoglycan biosynthesis. In terms of biological role, cell wall formation. Catalyzes the transfer of a GlcNAc subunit on undecaprenyl-pyrophosphoryl-MurNAc-pentapeptide (lipid intermediate I) to form undecaprenyl-pyrophosphoryl-MurNAc-(pentapeptide)GlcNAc (lipid intermediate II). This is UDP-N-acetylglucosamine--N-acetylmuramyl-(pentapeptide) pyrophosphoryl-undecaprenol N-acetylglucosamine transferase from Streptococcus pneumoniae (strain Taiwan19F-14).